We begin with the raw amino-acid sequence, 353 residues long: Polyadenylate-binding protein-interacting protein 10 (353 aa).

The disordered stretch occupies residues 1–61; sequence MAVAENAGVK…IDSTPETDDR (61 aa). Residues 20-31 show a composition bias toward low complexity; the sequence is NNNTAASATETT. The short motif at 96–106 is the PAM2-like element; sequence KLNPMAQEFVP. The interval 128 to 159 is disordered; the sequence is AAPPKLADGNDHFPRRRRSFGQGKRRMNKRTS. Residues 141 to 156 are compositionally biased toward basic residues; it reads PRRRRSFGQGKRRMNK. The Bipartite nuclear localization signal signature appears at 142–153; sequence RRRRSFGQGKRR. 2 RRM domains span residues 169-244 and 266-341; these read RTVY…PSKT.

In terms of tissue distribution, expressed in cauline leaves, stems, rosette leaves, immature siliques and primary inflorescences.

The protein resides in the nucleus. The protein is Polyadenylate-binding protein-interacting protein 10 (CID10) of Arabidopsis thaliana (Mouse-ear cress).